We begin with the raw amino-acid sequence, 589 residues long: TAF5-like RNA polymerase II p300/CBP-associated factor-associated factor 65 kDa subunit 5L (589 aa).

WD repeat units lie at residues 266 to 305 (NTEQLLNTAEISSDSKLLAAGFDNSCIKLWSLRSKKLKSE), 340 to 379 (GHCGPVYSTRFLADSSGLLSCSEDMSIRYWDLGSFTNTVL), 382 to 421 (GHAYPVWDVDISPFSLYFASGSHDRTARLWSFDRTYPLRI), 424 to 463 (GHLADVDCVKFHPNSNYLATGSTDKTVRLWSAQQGNSVRL), 466 to 505 (GHRGPVLSLSFSPNGKYLASAGEDQRLKLWDLASGTLFKE), and 508 to 547 (GHTDSITSLAFSPDSGLIASASMDNSVRVWDIRSTCCNTP).

The protein belongs to the WD repeat TAF5 family. As to quaternary structure, the PCAF complex is composed of a number of TBP-associated factors (TAFS), such as TAF5, TAF5L, TAF6, TAF6L, TAF9, TAF10 and TAF12, PCAF, and also PCAF-associated factors (PAFs), such as TADA2L/ADA2, TADA3L/ADA3 and SPT3. Component of the STAGA transcription coactivator-HAT complex, at least composed of SUPT3H, GCN5L2, TAF5L, TAF6L, SUPT7L, TADA3L, TAD1L, TAF10, TAF12, TRRAP and TAF9.

It localises to the nucleus. In terms of biological role, functions as a component of the PCAF complex. The PCAF complex is capable of efficiently acetylating histones in a nucleosomal context. The PCAF complex could be considered as the human version of the yeast SAGA complex. With TAF6L, acts as an epigenetic regulator essential for somatic reprogramming. Regulates target genes through H3K9ac deposition and MYC recruitment which trigger MYC regulatory network to orchestrate gene expression programs to control embryonic stem cell state. This Mus musculus (Mouse) protein is TAF5-like RNA polymerase II p300/CBP-associated factor-associated factor 65 kDa subunit 5L.